The primary structure comprises 20 residues: VAGKSFVPIALGRQSKQTPF.

It localises to the secreted. Its subcellular location is the cell wall. The sequence is that of 44 kDa cell wall protein 2 from Solanum lycopersicum (Tomato).